The primary structure comprises 479 residues: Aspartyl/glutamyl-tRNA(Asn/Gln) amidotransferase subunit B (479 aa).

Belongs to the GatB/GatE family. GatB subfamily. As to quaternary structure, heterotrimer of A, B and C subunits.

The catalysed reaction is L-glutamyl-tRNA(Gln) + L-glutamine + ATP + H2O = L-glutaminyl-tRNA(Gln) + L-glutamate + ADP + phosphate + H(+). It carries out the reaction L-aspartyl-tRNA(Asn) + L-glutamine + ATP + H2O = L-asparaginyl-tRNA(Asn) + L-glutamate + ADP + phosphate + 2 H(+). In terms of biological role, allows the formation of correctly charged Asn-tRNA(Asn) or Gln-tRNA(Gln) through the transamidation of misacylated Asp-tRNA(Asn) or Glu-tRNA(Gln) in organisms which lack either or both of asparaginyl-tRNA or glutaminyl-tRNA synthetases. The reaction takes place in the presence of glutamine and ATP through an activated phospho-Asp-tRNA(Asn) or phospho-Glu-tRNA(Gln). This is Aspartyl/glutamyl-tRNA(Asn/Gln) amidotransferase subunit B from Geobacter sulfurreducens (strain ATCC 51573 / DSM 12127 / PCA).